The sequence spans 167 residues: Ribosome maturation factor RimM (167 aa).

The region spanning 94-166 (DDRAWLHELE…YIHVPRFDEF (73 aa)) is the PRC barrel domain.

It belongs to the RimM family. Binds ribosomal protein uS19.

Its subcellular location is the cytoplasm. Its function is as follows. An accessory protein needed during the final step in the assembly of 30S ribosomal subunit, possibly for assembly of the head region. Essential for efficient processing of 16S rRNA. May be needed both before and after RbfA during the maturation of 16S rRNA. It has affinity for free ribosomal 30S subunits but not for 70S ribosomes. This Chlorobium luteolum (strain DSM 273 / BCRC 81028 / 2530) (Pelodictyon luteolum) protein is Ribosome maturation factor RimM.